Reading from the N-terminus, the 400-residue chain is Nicotinate phosphoribosyltransferase (400 aa).

His-220 is modified (phosphohistidine; by autocatalysis).

The protein belongs to the NAPRTase family. In terms of processing, transiently phosphorylated on a His residue during the reaction cycle. Phosphorylation strongly increases the affinity for substrates and increases the rate of nicotinate D-ribonucleotide production. Dephosphorylation regenerates the low-affinity form of the enzyme, leading to product release.

The catalysed reaction is nicotinate + 5-phospho-alpha-D-ribose 1-diphosphate + ATP + H2O = nicotinate beta-D-ribonucleotide + ADP + phosphate + diphosphate. It participates in cofactor biosynthesis; NAD(+) biosynthesis; nicotinate D-ribonucleotide from nicotinate: step 1/1. Functionally, catalyzes the synthesis of beta-nicotinate D-ribonucleotide from nicotinate and 5-phospho-D-ribose 1-phosphate at the expense of ATP. This Shigella dysenteriae serotype 1 (strain Sd197) protein is Nicotinate phosphoribosyltransferase.